The sequence spans 390 residues: 1-deoxy-D-xylulose 5-phosphate reductoisomerase (390 aa).

Residues T10, G11, S12, I13, G36, R37, N38, and N121 each coordinate NADPH. K122 is a 1-deoxy-D-xylulose 5-phosphate binding site. E123 is a binding site for NADPH. D147 provides a ligand contact to Mn(2+). Residues S148, E149, S173, and H196 each coordinate 1-deoxy-D-xylulose 5-phosphate. Residue E149 participates in Mn(2+) binding. G202 contributes to the NADPH binding site. 4 residues coordinate 1-deoxy-D-xylulose 5-phosphate: S209, N214, K215, and E218. E218 provides a ligand contact to Mn(2+). The tract at residues 367 to 390 (AASEHGRREAEKRVGARAHAPASR) is disordered. A compositionally biased stretch (basic and acidic residues) spans 370–380 (EHGRREAEKRV).

Belongs to the DXR family. The cofactor is Mg(2+). Requires Mn(2+) as cofactor.

The enzyme catalyses 2-C-methyl-D-erythritol 4-phosphate + NADP(+) = 1-deoxy-D-xylulose 5-phosphate + NADPH + H(+). Its pathway is isoprenoid biosynthesis; isopentenyl diphosphate biosynthesis via DXP pathway; isopentenyl diphosphate from 1-deoxy-D-xylulose 5-phosphate: step 1/6. Its function is as follows. Catalyzes the NADPH-dependent rearrangement and reduction of 1-deoxy-D-xylulose-5-phosphate (DXP) to 2-C-methyl-D-erythritol 4-phosphate (MEP). This chain is 1-deoxy-D-xylulose 5-phosphate reductoisomerase, found in Anaeromyxobacter dehalogenans (strain 2CP-1 / ATCC BAA-258).